A 187-amino-acid polypeptide reads, in one-letter code: uncharacterized protein (187 aa).

Residues 8-28 (ITFFIILLICLICILLLLVVF) form a helical membrane-spanning segment. A disordered region spans residues 99 to 153 (PLENRRDMEAEEENQINEKQEPENAGETGQEEDDGLQKIHTSVTRTPSVVESQKR). Over residues 137-149 (IHTSVTRTPSVVE) the composition is skewed to polar residues.

It localises to the membrane. This is an uncharacterized protein from Homo sapiens (Human).